Consider the following 32-residue polypeptide: Photosystem II reaction center protein T (32 aa).

The helical transmembrane segment at 3–23 (ALVYVFLLIGTLMIIFFAIFF) threads the bilayer.

Belongs to the PsbT family. As to quaternary structure, PSII is composed of 1 copy each of membrane proteins PsbA, PsbB, PsbC, PsbD, PsbE, PsbF, PsbH, PsbI, PsbJ, PsbK, PsbL, PsbM, PsbT, PsbY, PsbZ, Psb30/Ycf12, at least 3 peripheral proteins of the oxygen-evolving complex and a large number of cofactors. It forms dimeric complexes.

It is found in the plastid. The protein localises to the chloroplast thylakoid membrane. Found at the monomer-monomer interface of the photosystem II (PS II) dimer, plays a role in assembly and dimerization of PSII. PSII is a light-driven water plastoquinone oxidoreductase, using light energy to abstract electrons from H(2)O, generating a proton gradient subsequently used for ATP formation. The chain is Photosystem II reaction center protein T from Cyanidioschyzon merolae (strain NIES-3377 / 10D) (Unicellular red alga).